The chain runs to 314 residues: BURP domain-containing protein 8 (314 aa).

The first 16 residues, 1–16 (MDLVRLTSLLPPSVMG), serve as a signal peptide directing secretion. The BURP domain maps to 98–314 (FFLEKDLFPG…PLGDMLWVRN (217 aa)).

In terms of tissue distribution, expressed in shoot and panicles.

This Oryza sativa subsp. japonica (Rice) protein is BURP domain-containing protein 8 (BURP8).